Reading from the N-terminus, the 94-residue chain is Pyrimidine/purine nucleoside phosphorylase (94 aa).

Belongs to the nucleoside phosphorylase PpnP family.

It carries out the reaction a purine D-ribonucleoside + phosphate = a purine nucleobase + alpha-D-ribose 1-phosphate. The enzyme catalyses adenosine + phosphate = alpha-D-ribose 1-phosphate + adenine. The catalysed reaction is cytidine + phosphate = cytosine + alpha-D-ribose 1-phosphate. It catalyses the reaction guanosine + phosphate = alpha-D-ribose 1-phosphate + guanine. It carries out the reaction inosine + phosphate = alpha-D-ribose 1-phosphate + hypoxanthine. The enzyme catalyses thymidine + phosphate = 2-deoxy-alpha-D-ribose 1-phosphate + thymine. The catalysed reaction is uridine + phosphate = alpha-D-ribose 1-phosphate + uracil. It catalyses the reaction xanthosine + phosphate = alpha-D-ribose 1-phosphate + xanthine. Functionally, catalyzes the phosphorolysis of diverse nucleosides, yielding D-ribose 1-phosphate and the respective free bases. Can use uridine, adenosine, guanosine, cytidine, thymidine, inosine and xanthosine as substrates. Also catalyzes the reverse reactions. The sequence is that of Pyrimidine/purine nucleoside phosphorylase from Alcanivorax borkumensis (strain ATCC 700651 / DSM 11573 / NCIMB 13689 / SK2).